Consider the following 646-residue polypeptide: RNA-binding protein RMD9, mitochondrial (646 aa).

Residues 1–14 constitute a mitochondrion transit peptide; it reads MMLRRNAVRSLKTM. A propeptide spans 15 to 51 (removed in mature form); that stretch reads EISVSNVVNSGSIAMLRGKLANVVLSDRTYHSSPIFH. The PPR1 repeat unit spans residues 209–238; it reads VSGYGATHLLTSFKELSFDDDCIRIWEASK. One copy of the PPR2 repeat lies at 251 to 282; sequence EPKVVGFMLPLLYAKTRSLTEPNELYNQIIQS. A PPR3 repeat occupies 288-317; sequence PNLYSGLIKVFIKAEDYEKALSLFGQLCEK. Residues 323–353 form a PPR4 repeat; that stretch reads YGYLIETHLSFIGDSKNLTLAESFFDKIIND. Residues 363–394 form a PPR5 repeat; that stretch reads VSTVNSFLQNIWKAQNDFDHVYRIWEKAVKFY. The PPR6 repeat unit spans residues 401–439; that stretch reads GILSSLNNTFFTIFFENYINDNINGFRKLQEIITFYSGV. Residues 444 to 473 form a PPR7 repeat; sequence EPFFNVMLTRASIWHERSIIDFIDKNYTLY. A PPR8 repeat occupies 481–514; that stretch reads SYRILLKSLGSIDNTNNEEILDRWLELVKKLNEL.

This sequence belongs to the RMD9 family. Monomer. In terms of processing, phosphorylated. Phosphorylation promotes binding to RNA.

It is found in the mitochondrion inner membrane. Its function is as follows. Binds the RNA motif 5'-AAUAA[U/C]AUUCUU-3' in the 3'-UTR of mitochondrial mRNAs. Involved in the processing or stability of mitochondrial mRNAs. The sequence is that of RNA-binding protein RMD9, mitochondrial from Saccharomyces cerevisiae (strain ATCC 204508 / S288c) (Baker's yeast).